The chain runs to 176 residues: Large ribosomal subunit protein uL22z (176 aa).

Residues 154–163 (KEEPVKKEPE) show a composition bias toward basic and acidic residues. The tract at residues 154 to 176 (KEEPVKKEPETQLAAKSKKGASS) is disordered.

It belongs to the universal ribosomal protein uL22 family.

The sequence is that of Large ribosomal subunit protein uL22z (RPL17A) from Arabidopsis thaliana (Mouse-ear cress).